Reading from the N-terminus, the 159-residue chain is 2-C-methyl-D-erythritol 2,4-cyclodiphosphate synthase (159 aa).

Residues Asp8 and His10 each contribute to the a divalent metal cation site. Residues 8–10 (DVH) and 34–35 (HS) contribute to the 4-CDP-2-C-methyl-D-erythritol 2-phosphate site. His42 is an a divalent metal cation binding site. 4-CDP-2-C-methyl-D-erythritol 2-phosphate-binding positions include 56–58 (DIG), 100–106 (AQAPKMA), 132–135 (TTTE), Phe139, and Arg142.

This sequence belongs to the IspF family. In terms of assembly, homotrimer. A divalent metal cation is required as a cofactor.

It catalyses the reaction 4-CDP-2-C-methyl-D-erythritol 2-phosphate = 2-C-methyl-D-erythritol 2,4-cyclic diphosphate + CMP. Its pathway is isoprenoid biosynthesis; isopentenyl diphosphate biosynthesis via DXP pathway; isopentenyl diphosphate from 1-deoxy-D-xylulose 5-phosphate: step 4/6. Involved in the biosynthesis of isopentenyl diphosphate (IPP) and dimethylallyl diphosphate (DMAPP), two major building blocks of isoprenoid compounds. Catalyzes the conversion of 4-diphosphocytidyl-2-C-methyl-D-erythritol 2-phosphate (CDP-ME2P) to 2-C-methyl-D-erythritol 2,4-cyclodiphosphate (ME-CPP) with a corresponding release of cytidine 5-monophosphate (CMP). This is 2-C-methyl-D-erythritol 2,4-cyclodiphosphate synthase from Marinobacter nauticus (strain ATCC 700491 / DSM 11845 / VT8) (Marinobacter aquaeolei).